Reading from the N-terminus, the 88-residue chain is UPF0297 protein BT9727_4120 (88 aa).

This sequence belongs to the UPF0297 family.

The chain is UPF0297 protein BT9727_4120 from Bacillus thuringiensis subsp. konkukian (strain 97-27).